A 115-amino-acid polypeptide reads, in one-letter code: Large ribosomal subunit protein P1 (115 aa).

Residues 56–73 (QAAAAPVPASGGAAAPAE) show a composition bias toward low complexity. The disordered stretch occupies residues 56–115 (QAAAAPVPASGGAAAPAEGDADEADEADEEAEEEAADDGGDDDDDEDDEASGEGLGELFG). Residues 74-106 (GDADEADEADEEAEEEAADDGGDDDDDEDDEAS) show a composition bias toward acidic residues.

This sequence belongs to the eukaryotic ribosomal protein P1/P2 family. Part of the 50S ribosomal subunit. Homodimer, it forms part of the ribosomal stalk which helps the ribosome interact with GTP-bound translation factors. Forms a heptameric uL10/P0(P1)2(P1)2(P1)2 complex, where uL10/P0 forms an elongated spine to which the P1 dimers bind in a sequential fashion.

Forms part of the ribosomal stalk, playing a central role in the interaction of the ribosome with GTP-bound translation factors. The chain is Large ribosomal subunit protein P1 from Haloarcula marismortui (strain ATCC 43049 / DSM 3752 / JCM 8966 / VKM B-1809) (Halobacterium marismortui).